The following is a 101-amino-acid chain: NAD(P)H-quinone oxidoreductase subunit 4L, chloroplastic (101 aa).

A run of 3 helical transmembrane segments spans residues 2–22 (MLEYALVLSAFLFSIGIYGLI), 32–52 (MCLELILNAVNMNLVTFSYFF), and 61–81 (IFSIFIIAIAAAEAAIGLAIV).

The protein belongs to the complex I subunit 4L family. As to quaternary structure, NDH is composed of at least 16 different subunits, 5 of which are encoded in the nucleus.

It is found in the plastid. The protein localises to the chloroplast thylakoid membrane. The catalysed reaction is a plastoquinone + NADH + (n+1) H(+)(in) = a plastoquinol + NAD(+) + n H(+)(out). The enzyme catalyses a plastoquinone + NADPH + (n+1) H(+)(in) = a plastoquinol + NADP(+) + n H(+)(out). Its function is as follows. NDH shuttles electrons from NAD(P)H:plastoquinone, via FMN and iron-sulfur (Fe-S) centers, to quinones in the photosynthetic chain and possibly in a chloroplast respiratory chain. The immediate electron acceptor for the enzyme in this species is believed to be plastoquinone. Couples the redox reaction to proton translocation, and thus conserves the redox energy in a proton gradient. The polypeptide is NAD(P)H-quinone oxidoreductase subunit 4L, chloroplastic (Ipomoea purpurea (Common morning glory)).